The primary structure comprises 232 residues: 2-C-methyl-D-erythritol 4-phosphate cytidylyltransferase (232 aa).

Belongs to the IspD/TarI cytidylyltransferase family. IspD subfamily.

It carries out the reaction 2-C-methyl-D-erythritol 4-phosphate + CTP + H(+) = 4-CDP-2-C-methyl-D-erythritol + diphosphate. Its pathway is isoprenoid biosynthesis; isopentenyl diphosphate biosynthesis via DXP pathway; isopentenyl diphosphate from 1-deoxy-D-xylulose 5-phosphate: step 2/6. In terms of biological role, catalyzes the formation of 4-diphosphocytidyl-2-C-methyl-D-erythritol from CTP and 2-C-methyl-D-erythritol 4-phosphate (MEP). This is 2-C-methyl-D-erythritol 4-phosphate cytidylyltransferase from Stenotrophomonas maltophilia (strain R551-3).